Consider the following 313-residue polypeptide: Pantothenate synthetase (313 aa).

43–50 (MGALHEGH) is an ATP binding site. The active-site Proton donor is His50. Residue Gln75 coordinates (R)-pantoate. Gln75 is a binding site for beta-alanine. Residue 161-164 (GEKD) coordinates ATP. Gln167 provides a ligand contact to (R)-pantoate. ATP-binding positions include Val190 and 198–201 (LSSR).

It belongs to the pantothenate synthetase family. Homodimer.

The protein localises to the cytoplasm. The enzyme catalyses (R)-pantoate + beta-alanine + ATP = (R)-pantothenate + AMP + diphosphate + H(+). The protein operates within cofactor biosynthesis; (R)-pantothenate biosynthesis; (R)-pantothenate from (R)-pantoate and beta-alanine: step 1/1. In terms of biological role, catalyzes the condensation of pantoate with beta-alanine in an ATP-dependent reaction via a pantoyl-adenylate intermediate. The protein is Pantothenate synthetase of Mycobacterium sp. (strain KMS).